The primary structure comprises 236 residues: Urease accessory protein UreF (236 aa).

It belongs to the UreF family. UreD, UreF and UreG form a complex that acts as a GTP-hydrolysis-dependent molecular chaperone, activating the urease apoprotein by helping to assemble the nickel containing metallocenter of UreC. The UreE protein probably delivers the nickel.

It is found in the cytoplasm. Its function is as follows. Required for maturation of urease via the functional incorporation of the urease nickel metallocenter. In Granulibacter bethesdensis (strain ATCC BAA-1260 / CGDNIH1), this protein is Urease accessory protein UreF.